The following is a 514-amino-acid chain: MNYMIIYEIIAGILIVVAILIHFNIMKNKVAAIKSQTIYESNRLKEEAKKEAQSQKKEAILEAKEEVHKLRNDLERESRDRRMEIQRLEKRVLQREELLDKKNDVLEKRESSLDKKQQEIDKVQAKVEELYQKQREELERLSGLSSEEAKDILLEEVNKEIKHESAMMIKEVETKAKEEADKRAREIITSAIQRCAADHVAETTVHVVTLPNDEMKGRIIGREGRNIRTLETLTGVDLIIDDTPEAVILSGFDPIRREVARIALEKLIIDGRIHPARIEEMVEKAEKELENDIKEEGEQATFETGVHGLHIELIKLLGRLKYRTSYGQNVLKHSVEVAYLAGLMASEIGIDPTIAKRAGLLHDIGKAVDHEVEGPHAVIGAEIAKKYRESPVVVNAIGAHHGDLEFQSLEDVLVQAADAISAARPGARRETLEAYIKRLEKLEKIANTCEGVEKSYAIQAGRELRIMVKPEDIDDAGALEMARNIVKKIEEELEYPGQIKVNVIRETRAIEYAK.

The chain crosses the membrane as a helical span at residues 3 to 23 (YMIIYEIIAGILIVVAILIHF). One can recognise a KH domain in the interval 204–289 (TVHVVTLPND…EMVEKAEKEL (86 aa)). Residues 330–423 (VLKHSVEVAY…VQAADAISAA (94 aa)) enclose the HD domain.

It belongs to the RNase Y family.

It localises to the cell membrane. Its function is as follows. Endoribonuclease that initiates mRNA decay. The polypeptide is Ribonuclease Y (Clostridium kluyveri (strain ATCC 8527 / DSM 555 / NBRC 12016 / NCIMB 10680 / K1)).